Consider the following 209-residue polypeptide: Large ribosomal subunit protein uL4 (209 aa).

Positions 46–71 are disordered; that stretch reads GTSSTKTRSEVRGSSKKPWKQKGTGR. A compositionally biased stretch (basic residues) spans 59–71; sequence SSKKPWKQKGTGR.

Belongs to the universal ribosomal protein uL4 family. As to quaternary structure, part of the 50S ribosomal subunit.

Its function is as follows. One of the primary rRNA binding proteins, this protein initially binds near the 5'-end of the 23S rRNA. It is important during the early stages of 50S assembly. It makes multiple contacts with different domains of the 23S rRNA in the assembled 50S subunit and ribosome. In terms of biological role, forms part of the polypeptide exit tunnel. The polypeptide is Large ribosomal subunit protein uL4 (Borrelia garinii subsp. bavariensis (strain ATCC BAA-2496 / DSM 23469 / PBi) (Borreliella bavariensis)).